A 322-amino-acid polypeptide reads, in one-letter code: MDSADPNEPTFPCPICDRRFIKSSLEKHESACRKLASLHRKPFDSGKQRASGSDLTYADIKKVQHEKNKNGGVFPRPQTNWRERHGNFIDAVSSSKRVDYALKTGAPLPPPPKTAVPSDYVQCEYCSRNFNAAAAERHIPFCREQATRKQGGNLKSSGGNRALTGNYRSTPSKNEGKKQESSSRNGSAERKPTTRGRDGSLLRARRDDSNDITSRRKSLDTRTSLTTGQASNRHTSLSAGMRPTLPPMTPSSKRSSSAKRDAPLQQSSTPQQRLKTPASTTTTASRSGSRTSSRACPRDDSRDSRLSQAKNNSRNNSRSRIF.

2 C2HC/C3H-type zinc fingers span residues 9-38 (PTFPCPICDRRFIKSSLEKHESACRKLASL) and 119-148 (DYVQCEYCSRNFNAAAAERHIPFCREQATR). Residues Cys13, Cys16, His28, Cys32, Cys123, Cys126, His138, and Cys142 each contribute to the Zn(2+) site. Residues 150–159 (QGGNLKSSGG) are compositionally biased toward polar residues. A disordered region spans residues 150–322 (QGGNLKSSGG…SRNNSRSRIF (173 aa)). The segment covering 174 to 220 (NEGKKQESSSRNGSAERKPTTRGRDGSLLRARRDDSNDITSRRKSLD) has biased composition (basic and acidic residues). Polar residues-rich tracts occupy residues 221–238 (TRTSLTTGQASNRHTSLS) and 264–274 (LQQSSTPQQRL). The segment covering 276 to 295 (TPASTTTTASRSGSRTSSRA) has biased composition (low complexity). Residues 296 to 305 (CPRDDSRDSR) show a composition bias toward basic and acidic residues. Residues 311–322 (NNSRNNSRSRIF) show a composition bias toward low complexity.

This sequence belongs to the ZC2HC1 family. Zn(2+) serves as cofactor.

In Caenorhabditis elegans, this protein is Zinc finger C2HC domain-containing protein zchc-1A.